Consider the following 418-residue polypeptide: Dihydrofolate synthase/folylpolyglutamate synthase (418 aa).

Position 53–56 (glycine 53–threonine 56) interacts with ATP. Serine 77 provides a ligand contact to Mg(2+). Threonine 116–glutamate 119 contributes to the 7,8-dihydropteroate binding site. Glutamate 140 provides a ligand contact to Mg(2+). Leucine 147–alanine 149 provides a ligand contact to 7,8-dihydropteroate. Residue histidine 167 coordinates Mg(2+). Asparagine 252, arginine 284, and aspartate 297 together coordinate ATP.

Belongs to the folylpolyglutamate synthase family. Monomer. Requires Mg(2+) as cofactor.

The enzyme catalyses 7,8-dihydropteroate + L-glutamate + ATP = 7,8-dihydrofolate + ADP + phosphate + H(+). It catalyses the reaction (6S)-5,6,7,8-tetrahydrofolyl-(gamma-L-Glu)(n) + L-glutamate + ATP = (6S)-5,6,7,8-tetrahydrofolyl-(gamma-L-Glu)(n+1) + ADP + phosphate + H(+). It carries out the reaction 10-formyltetrahydrofolyl-(gamma-L-Glu)(n) + L-glutamate + ATP = 10-formyltetrahydrofolyl-(gamma-L-Glu)(n+1) + ADP + phosphate + H(+). The catalysed reaction is (6R)-5,10-methylenetetrahydrofolyl-(gamma-L-Glu)(n) + L-glutamate + ATP = (6R)-5,10-methylenetetrahydrofolyl-(gamma-L-Glu)(n+1) + ADP + phosphate + H(+). Its pathway is cofactor biosynthesis; tetrahydrofolate biosynthesis; 7,8-dihydrofolate from 2-amino-4-hydroxy-6-hydroxymethyl-7,8-dihydropteridine diphosphate and 4-aminobenzoate: step 2/2. It functions in the pathway cofactor biosynthesis; tetrahydrofolylpolyglutamate biosynthesis. Its function is as follows. Functions in two distinct reactions of the de novo folate biosynthetic pathway. Catalyzes the addition of a glutamate residue to dihydropteroate (7,8-dihydropteroate or H2Pte) to form dihydrofolate (7,8-dihydrofolate monoglutamate or H2Pte-Glu). Also catalyzes successive additions of L-glutamate to tetrahydrofolate or 10-formyltetrahydrofolate or 5,10-methylenetetrahydrofolate, leading to folylpolyglutamate derivatives. The polypeptide is Dihydrofolate synthase/folylpolyglutamate synthase (folC) (Buchnera aphidicola subsp. Schizaphis graminum (strain Sg)).